Consider the following 339-residue polypeptide: Deubiquitinase and deneddylase Dub2 (339 aa).

A helical membrane pass occupies residues 36-56; sequence IIIALFLIVISCGLILCAYTF. Active-site residues include His203, Asp220, and Cys282.

This sequence belongs to the peptidase C48 family.

The protein resides in the secreted. Its subcellular location is the host cell. It is found in the membrane. Effector proteins function to alter host cell physiology and promote bacterial survival in host tissues. This protease possesses deubiquitinating and deneddylating activities. The chain is Deubiquitinase and deneddylase Dub2 (cdu2) from Chlamydia trachomatis serovar A (strain ATCC VR-571B / DSM 19440 / HAR-13).